The sequence spans 173 residues: Inosine/xanthosine triphosphatase (173 aa).

8–13 serves as a coordination point for substrate; sequence TTNPAK. Positions 38 and 68 each coordinate Mg(2+). Position 68-69 (68-69) interacts with substrate; sequence EA.

The protein belongs to the YjjX NTPase family. In terms of assembly, homodimer. Mg(2+) is required as a cofactor. It depends on Mn(2+) as a cofactor.

It carries out the reaction XTP + H2O = XDP + phosphate + H(+). It catalyses the reaction ITP + H2O = IDP + phosphate + H(+). In terms of biological role, phosphatase that hydrolyzes non-canonical purine nucleotides such as XTP and ITP to their respective diphosphate derivatives. Probably excludes non-canonical purines from DNA/RNA precursor pool, thus preventing their incorporation into DNA/RNA and avoiding chromosomal lesions. This is Inosine/xanthosine triphosphatase (yjjX) from Escherichia coli (strain ATCC 8739 / DSM 1576 / NBRC 3972 / NCIMB 8545 / WDCM 00012 / Crooks).